A 385-amino-acid polypeptide reads, in one-letter code: 1-deoxy-D-xylulose 5-phosphate reductoisomerase (385 aa).

Ser10, Gly11, Ser12, Ile13, Gly36, Asn38, and Asn124 together coordinate NADPH. Lys125 serves as a coordination point for 1-deoxy-D-xylulose 5-phosphate. Glu126 is a binding site for NADPH. A Mn(2+)-binding site is contributed by Asp150. Residues Ser151, Glu152, Ser176, and His198 each coordinate 1-deoxy-D-xylulose 5-phosphate. Glu152 lines the Mn(2+) pocket. Gly204 contributes to the NADPH binding site. 1-deoxy-D-xylulose 5-phosphate-binding residues include Ser211, Asn216, Lys217, and Glu220. Glu220 contributes to the Mn(2+) binding site.

This sequence belongs to the DXR family. Mg(2+) is required as a cofactor. Mn(2+) serves as cofactor.

The catalysed reaction is 2-C-methyl-D-erythritol 4-phosphate + NADP(+) = 1-deoxy-D-xylulose 5-phosphate + NADPH + H(+). Its pathway is isoprenoid biosynthesis; isopentenyl diphosphate biosynthesis via DXP pathway; isopentenyl diphosphate from 1-deoxy-D-xylulose 5-phosphate: step 1/6. Its function is as follows. Catalyzes the NADPH-dependent rearrangement and reduction of 1-deoxy-D-xylulose-5-phosphate (DXP) to 2-C-methyl-D-erythritol 4-phosphate (MEP). This chain is 1-deoxy-D-xylulose 5-phosphate reductoisomerase, found in Endomicrobium trichonymphae.